Consider the following 423-residue polypeptide: Torsin-4A (423 aa).

A disordered region spans residues 47 to 68; that stretch reads PGGGPDVGTGAPRPGCSPRAPR. Phosphoserine is present on residues serine 63 and serine 81. Position 89 is a phosphothreonine (threonine 89). Position 106 is a phosphoserine (serine 106). A helical membrane pass occupies residues 122–138; the sequence is CLLLLVAIVGFQVLNAI. 194–201 serves as a coordination point for ATP; it reads GPSGVGKS.

The protein belongs to the ClpA/ClpB family. Torsin subfamily.

Its subcellular location is the membrane. This is Torsin-4A (TOR4A) from Homo sapiens (Human).